A 3421-amino-acid polypeptide reads, in one-letter code: Hemocyanin 2 (3421 aa).

The N-terminal stretch at 1–19 is a signal peptide; sequence MWTILALLTATLLFEGAFS. Residues 20–442 form a functional unit a (wall) region; sequence VDTVVRKNVD…KPPVPVAQAN (423 aa). Residue His62 coordinates Cu cation. A disulfide bridge links Cys68 with Cys78. The segment at residues 79 to 81 is a cross-link (2'-(S-cysteinyl)-histidine (Cys-His)); the sequence is CLH. Cu cation is bound by residues His81, His90, His200, His204, and His231. Disulfide bonds link Cys190–Cys257 and Cys344–Cys356. Residue Asn408 is glycosylated (N-linked (GlcNAc...) asparagine). Positions 443-853 are functional unit b (wall); it reads LAVRKNINDL…RADAKDFGHS (411 aa). Position 483 (His483) interacts with Cu cation. Cys489 and Cys500 form a disulfide bridge. The 2'-(S-cysteinyl)-histidine (Cys-His) cross-link spans 501–503; it reads CVH. Cu cation-binding residues include His503, His512, His622, His626, His653, and His894. Cys612 and Cys678 form a disulfide bridge. The WD 1 repeat unit spans residues 632 to 673; sequence SEKYSMSSLHYTAFDPIFYLHHSNVDRLWAIWQALQIRRGKS. The functional unit c (wall) stretch occupies residues 854 to 1275; sequence RKIRKAVDSL…DEYREAVTSA (422 aa). The cysteines at positions 900 and 911 are disulfide-linked. The 2'-(S-cysteinyl)-histidine (Cys-His) cross-link spans 912-914; the sequence is CVH. Cu cation is bound by residues His914, His923, His1033, His1037, and His1063. 2 cysteine pairs are disulfide-bonded: Cys1023/Cys1090 and Cys1180/Cys1187. The WD 2 repeat unit spans residues 1043–1084; the sequence is NEPYSMSSLRYTTYDPIFFLHRSNTDRLWAIWQALQKYRGKP. The N-linked (GlcNAc...) asparagine glycan is linked to Asn1183. The tract at residues 1276 to 1685 is functional unit d (wall); that stretch reads SHIRKNIRDL…NIYYDGLSQH (410 aa). His1313 is a Cu cation binding site. Cys1319 and Cys1328 are joined by a disulfide. The 2'-(S-cysteinyl)-histidine (Cys-His) cross-link spans 1329 to 1331; the sequence is CVH. Cu cation contacts are provided by His1331 and His1340. The WD 3 repeat unit spans residues 1387–1425; it reads QTFDPNPFFRGHIAFENAVTSRDPQPELWDNKDFYENVM. 2 disulfides stabilise this stretch: Cys1434–Cys1501 and Cys1590–Cys1599. Residues His1444, His1448, and His1475 each contribute to the Cu cation site. The WD 4 repeat unit spans residues 1454-1495; sequence RAKYSLSSLDYTAFDPVFFLHHANVDRIWAIWQDLQRYRKKP. Residue Asn1653 is glycosylated (N-linked (GlcNAc...) asparagine). A functional unit e (wall) region spans residues 1686-2102; the sequence is NLVRKEVSSL…HGINVRHVGR (417 aa). His1726 is a binding site for Cu cation. The cysteines at positions 1732 and 1743 are disulfide-linked. The 2'-(S-cysteinyl)-histidine (Cys-His) cross-link spans 1744–1746; sequence CLH. His1746, His1755, His1868, His1872, and His1899 together coordinate Cu cation. 2 cysteine pairs are disulfide-bonded: Cys1858–Cys1925 and Cys2014–Cys2020. The WD 5 repeat unit spans residues 1878-1919; that stretch reads SKTHSIGHLHYASYDPLFYIHHSQTDRIWAIWQALQEHRGLS. The segment at 2103 to 2522 is functional unit f (wall); the sequence is NRIRMELSEL…DDHGSDHIAG (420 aa). His2143 provides a ligand contact to Cu cation. A disulfide bridge links Cys2149 with Cys2159. The 2'-(S-cysteinyl)-histidine (Cys-His) cross-link spans 2160–2162; it reads CIH. Cu cation-binding residues include His2162, His2171, His2281, His2285, and His2312. The stretch at 2168–2204 is one WD 6 repeat; that stretch reads PHWHRLYTLQMDMALLSHGSAVAIPYWDWTKPISKLP. Disulfide bonds link Cys2271–Cys2338 and Cys2425–Cys2431. The segment at 2523–2929 is functional unit g (internal arc); the sequence is SGVRKDVTSL…SGHDHSERHD (407 aa). Residue His2563 coordinates Cu cation. Cys2569 and Cys2579 are disulfide-bonded. The 2'-(S-cysteinyl)-histidine (Cys-His) cross-link spans 2580–2582; the sequence is CTH. Positions 2582, 2591, 2691, 2695, and 2722 each coordinate Cu cation. Intrachain disulfides connect Cys2681–Cys2748 and Cys2835–Cys2841. A WD 7 repeat occupies 2700–2742; that stretch reads GHTPYGMSSLEYTAYDPLFYLHHSNTDRIWAIWQALQKYRGFQ. The interval 2898–2927 is disordered; it reads PSDRIKSPTIEHHGGDHHGGDTSGHDHSER. The functional unit h (internal slab) stretch occupies residues 2930–3421; sequence GFFRKEVGSL…VRIHIHIEDE (492 aa). His2970 is a Cu cation binding site. Cys2976 and Cys2986 are joined by a disulfide. A cross-link (2'-(S-cysteinyl)-histidine (Cys-His)) is located at residues 2987-2989; it reads CVH. Cu cation contacts are provided by His2989, His2998, His3099, His3103, and His3130. 2 disulfide bridges follow: Cys3089–Cys3156 and Cys3374–Cys3407. Residues 3109–3150 form a WD 8 repeat; sequence TETYSMSSLAFSAYDPVFMILHSGLDRLWIIWQELQKLRKKP.

Belongs to the tyrosinase family. Hemocyanin subfamily. In terms of assembly, homo-didecamer and homo-multidecamer. In terms of processing, probably N-glycosylated. Asn-2489 is buried deeply in the protein which make it inaccessible for sugar attachment. As to expression, hemolymph.

It localises to the secreted. Its subcellular location is the extracellular space. Functionally, hemocyanins are copper-containing oxygen carriers occurring freely dissolved in the hemolymph of many mollusks and arthropods. The sequence is that of Hemocyanin 2 from Megathura crenulata (Giant keyhole limpet).